Here is a 213-residue protein sequence, read N- to C-terminus: High frequency lysogenization protein HflD homolog (213 aa).

The protein belongs to the HflD family.

Its subcellular location is the cytoplasm. The protein localises to the cell inner membrane. This chain is High frequency lysogenization protein HflD homolog, found in Nitrosococcus oceani (strain ATCC 19707 / BCRC 17464 / JCM 30415 / NCIMB 11848 / C-107).